The chain runs to 313 residues: Chemotaxis protein CheV2 (313 aa).

The region spanning 16–172 (EAQFLCFRLD…VEKMISDVFP (157 aa)) is the CheW-like domain. A Response regulatory domain is found at 193–313 (LILIAEDSLS…IHEMLKKTLS (121 aa)). Aspartate 246 is subject to 4-aspartylphosphate.

In terms of processing, phosphorylated; probably by transfer of CheAY phosphate group.

In terms of biological role, plays a role in chemotaxis signal transduction system in order to colonize the host stomach. May act as a phosphate sink to control the flow of phosphate to CheAY. The polypeptide is Chemotaxis protein CheV2 (Helicobacter pylori (strain ATCC 700392 / 26695) (Campylobacter pylori)).